Here is a 122-residue protein sequence, read N- to C-terminus: Large ribosomal subunit protein uL14 (122 aa).

This sequence belongs to the universal ribosomal protein uL14 family. As to quaternary structure, part of the 50S ribosomal subunit. Forms a cluster with proteins L3 and L19. In the 70S ribosome, L14 and L19 interact and together make contacts with the 16S rRNA in bridges B5 and B8.

Functionally, binds to 23S rRNA. Forms part of two intersubunit bridges in the 70S ribosome. The protein is Large ribosomal subunit protein uL14 of Cereibacter sphaeroides (strain ATCC 17029 / ATH 2.4.9) (Rhodobacter sphaeroides).